Reading from the N-terminus, the 575-residue chain is Sodium/calcium exchanger NCL2 (575 aa).

The next 3 membrane-spanning stretches (helical) occupy residues 69–89 (FLPCTTTAWGNLFLVLAYGFL), 112–132 (IVGGLFLPILGALPDALLILV), and 146–166 (VLIGMGLLAGSTVMLLTLLWG). N-linked (GlcNAc...) asparagine glycosylation is present at asparagine 179. 2 helical membrane passes run 210-230 (IMAISILPFIIVQIPKIFKLH) and 237-257 (VLIGLIVAALLLLSYCLYQVF). EF-hand domains follow at residues 297–332 (PNVSVIEKLFHRIDQDNDGKLERGELQAFIVGINFE) and 337–372 (NSNLAADQVMADFDTSRNHFIEKGEFVNGMLRWLDE). A glycan (N-linked (GlcNAc...) asparagine) is linked at asparagine 298. The Ca(2+) site is built by aspartate 310, aspartate 312, aspartate 314, lysine 316, glutamate 321, aspartate 350, serine 352, asparagine 354, and glutamate 361. Transmembrane regions (helical) follow at residues 417-437 (WTCIKAILLLLLGTAMAAASA), 457-477 (FISFIVMPLATNSSEAVSAII), 494-514 (VYGGVTMNNTLCLAVFLALVY), 522-542 (FSSEVLIILLVCIIMGLFTSF), and 548-568 (LWTCFVAFLLYPLSLIMVYIL).

Belongs to the Ca(2+):cation antiporter (CaCA) (TC 2.A.19) family.

The protein localises to the cell membrane. In terms of biological role, may function as a sodium/calcium exchanger (NCX) and participate in the maintenance of calcium homeostasis. May play a role abiotic stress responses. The protein is Sodium/calcium exchanger NCL2 of Oryza sativa subsp. japonica (Rice).